Consider the following 389-residue polypeptide: Oxysterol-binding protein 1 (389 aa).

Coiled coils occupy residues 1-31 and 340-371; these read MGKK…NKPA and KDDV…DEWK. Residues 1-43 are disordered; it reads MGKKDKNVSVEEEVDEAEIEKLAAENANKPAPQLTKEDLDAMD.

The protein belongs to the OSBP family. In terms of assembly, interacts with dstC.

It is found in the cytoplasm. May play a role in the regulation of the slug-fruiting body switch. The polypeptide is Oxysterol-binding protein 1 (osbA) (Dictyostelium discoideum (Social amoeba)).